Reading from the N-terminus, the 454-residue chain is Na(+)/H(+) antiporter NhaA (454 aa).

The next 10 membrane-spanning stretches (helical) occupy residues 22–42, 64–84, 106–126, 150–170, 190–210, 228–248, 284–304, 306–326, 355–375, and 386–406; these read ISGLIMLGFALAGLLLANLPF, MGLGHWVQDGLLTVFFLTVGL, LCAVGGMLAPPVLFIGVISLF, GWAVPTATDIAFSLAVLALFA, LLAIILIAVFFSSVNAWYWFL, VPWLAVAIVGVLAWVMMFEAG, PFSALLALPIFALFATGVHFE, LTLALFVSPVVVAVMVALVVG, MFPAACACGIGFTVSFLIASL, and ARFGVLVGSMVAAVISGILLS.

The protein belongs to the NhaA Na(+)/H(+) (TC 2.A.33) antiporter family.

The protein resides in the cell membrane. The enzyme catalyses Na(+)(in) + 2 H(+)(out) = Na(+)(out) + 2 H(+)(in). Its function is as follows. Na(+)/H(+) antiporter that extrudes sodium in exchange for external protons. This is Na(+)/H(+) antiporter NhaA from Bifidobacterium adolescentis (strain ATCC 15703 / DSM 20083 / NCTC 11814 / E194a).